We begin with the raw amino-acid sequence, 29 residues long: YCQKFLWTCDTERKCCEDMVCELWCKYKE.

3 cysteine pairs are disulfide-bonded: Cys2–Cys16, Cys9–Cys21, and Cys15–Cys25.

It belongs to the neurotoxin 30 (phrixotoxin) family. Expressed by the venom gland.

The protein localises to the secreted. In terms of biological role, insect-selective neurotoxin that potently blocks insect calcium-activated potassium (BKCa) channels (Slo-type) in cockroach dorsal unpaired median (DUM) neurons (IC(50)=25.3 nM). This occurs in the absence of any shifts in the voltage dependence of activation. May interact with the turret and/or loop region of the external entrance to the channel and does not project deeply into the pore of the channel. In vivo, does not show toxicity in mice after intracerebroventricular injection of up to 25 pmol/g (1.8 ug/20 g mouse). The sequence is that of Lambda-theraphotoxin-Ec2b from Eucratoscelus constrictus (African red-rump baboon spider).